The following is a 363-amino-acid chain: 3-dehydroquinate synthase (363 aa).

NAD(+)-binding positions include 103–107 (GAVGD), 127–128 (TT), Lys139, Lys148, and 166–169 (FSET). Zn(2+) contacts are provided by Glu181, His243, and His260.

This sequence belongs to the sugar phosphate cyclases superfamily. Dehydroquinate synthase family. Requires Co(2+) as cofactor. It depends on Zn(2+) as a cofactor. The cofactor is NAD(+).

The protein resides in the cytoplasm. The enzyme catalyses 7-phospho-2-dehydro-3-deoxy-D-arabino-heptonate = 3-dehydroquinate + phosphate. The protein operates within metabolic intermediate biosynthesis; chorismate biosynthesis; chorismate from D-erythrose 4-phosphate and phosphoenolpyruvate: step 2/7. Functionally, catalyzes the conversion of 3-deoxy-D-arabino-heptulosonate 7-phosphate (DAHP) to dehydroquinate (DHQ). This Lysinibacillus sphaericus (strain C3-41) protein is 3-dehydroquinate synthase.